The primary structure comprises 104 residues: Large ribosomal subunit protein cL38 (104 aa).

A chloroplast-targeting transit peptide spans 1–39 (MASVSSIFGCGVSMAPNSSLRNKAIRTERRSACGGLLIE). The disordered stretch occupies residues 42–76 (SRPQKKSTAHHMKTRPRKSRLSDRNRKPTVYAPLP). Residues 44–60 (PQKKSTAHHMKTRPRKS) show a composition bias toward basic residues.

It belongs to the chloroplast-specific ribosomal protein cL38 family. In terms of assembly, part of the 50S ribosomal subunit.

It is found in the plastid. The protein resides in the chloroplast. The sequence is that of Large ribosomal subunit protein cL38 (PSRP6) from Pisum sativum (Garden pea).